The primary structure comprises 527 residues: Cytochrome P450 714B3 (527 aa).

Topologically, residues 1 to 14 are lumenal; sequence MEVAMAMAVKVLLS. The chain crosses the membrane as a helical; Signal-anchor for type III membrane protein span at residues 15–35; it reads LCCVGACGLAVYLYHILWLVP. At 36–527 the chain is on the cytoplasmic side; that stretch reads QKVLAKFEDQ…SVCTKRGTAI (492 aa). C464 provides a ligand contact to heme.

Belongs to the cytochrome P450 family. Heme serves as cofactor.

Its subcellular location is the membrane. May be involved in gibberellin metabolism. The polypeptide is Cytochrome P450 714B3 (CYP714B3) (Zea mays (Maize)).